The following is a 477-amino-acid chain: Bifunctional protein HldE (477 aa).

Residues 1–318 (MKVTLPEFER…ENAVRGRADT (318 aa)) form a ribokinase region. Position 179 is an N6-acetyllysine (lysine 179). An ATP-binding site is contributed by 195 to 198 (NLSE). The active site involves aspartate 264. Residues 344–477 (MTNGVFDILH…IKKIQQDKKG (134 aa)) are cytidylyltransferase.

It in the N-terminal section; belongs to the carbohydrate kinase PfkB family. This sequence in the C-terminal section; belongs to the cytidylyltransferase family. Homodimer.

It catalyses the reaction D-glycero-beta-D-manno-heptose 7-phosphate + ATP = D-glycero-beta-D-manno-heptose 1,7-bisphosphate + ADP + H(+). It carries out the reaction D-glycero-beta-D-manno-heptose 1-phosphate + ATP + H(+) = ADP-D-glycero-beta-D-manno-heptose + diphosphate. It participates in nucleotide-sugar biosynthesis; ADP-L-glycero-beta-D-manno-heptose biosynthesis; ADP-L-glycero-beta-D-manno-heptose from D-glycero-beta-D-manno-heptose 7-phosphate: step 1/4. The protein operates within nucleotide-sugar biosynthesis; ADP-L-glycero-beta-D-manno-heptose biosynthesis; ADP-L-glycero-beta-D-manno-heptose from D-glycero-beta-D-manno-heptose 7-phosphate: step 3/4. Its pathway is bacterial outer membrane biogenesis; LPS core biosynthesis. Functionally, catalyzes the phosphorylation of D-glycero-D-manno-heptose 7-phosphate at the C-1 position to selectively form D-glycero-beta-D-manno-heptose-1,7-bisphosphate. Catalyzes the ADP transfer from ATP to D-glycero-beta-D-manno-heptose 1-phosphate, yielding ADP-D-glycero-beta-D-manno-heptose. The polypeptide is Bifunctional protein HldE (Escherichia coli O157:H7).